The sequence spans 104 residues: Thioredoxin-3 (104 aa).

Residues 2–104 (SKVIHVTSNE…TLRSTLEANI (103 aa)) form the Thioredoxin domain. Residues C31 and C34 each act as nucleophile in the active site. Cysteines 31 and 34 form a disulfide.

This sequence belongs to the thioredoxin family.

Participates in various redox reactions through the reversible oxidation of its active center dithiol to a disulfide and catalyzes dithiol-disulfide exchange reactions. In Dictyostelium discoideum (Social amoeba), this protein is Thioredoxin-3 (trxC).